The chain runs to 97 residues: UPF0390 protein CNBD1430 (97 aa).

2 disordered regions span residues 1 to 57 (MAQG…INNS) and 75 to 97 (RNVGELESGEGKDGKAKGKGKSR). Residues 29 to 46 (GKREVAPKDRQRVLERSQ) show a composition bias toward basic and acidic residues. Over residues 48–57 (KQLSSKINNS) the composition is skewed to polar residues.

It belongs to the UPF0390 family.

This chain is UPF0390 protein CNBD1430, found in Cryptococcus neoformans var. neoformans serotype D (strain B-3501A) (Filobasidiella neoformans).